Here is a 130-residue protein sequence, read N- to C-terminus: Large ribosomal subunit protein eL22 (130 aa).

Belongs to the eukaryotic ribosomal protein eL22 family.

This Caenorhabditis elegans protein is Large ribosomal subunit protein eL22 (rpl-22).